The primary structure comprises 419 residues: Enolase (419 aa).

Q160 is a binding site for (2R)-2-phosphoglycerate. The Proton donor role is filled by E204. D240, E283, and D309 together coordinate Mg(2+). (2R)-2-phosphoglycerate is bound by residues K334, R363, S364, and K385. The active-site Proton acceptor is the K334.

It belongs to the enolase family. It depends on Mg(2+) as a cofactor.

The protein resides in the cytoplasm. Its subcellular location is the secreted. The protein localises to the cell surface. It carries out the reaction (2R)-2-phosphoglycerate = phosphoenolpyruvate + H2O. The protein operates within carbohydrate degradation; glycolysis; pyruvate from D-glyceraldehyde 3-phosphate: step 4/5. Functionally, catalyzes the reversible conversion of 2-phosphoglycerate (2-PG) into phosphoenolpyruvate (PEP). It is essential for the degradation of carbohydrates via glycolysis. This is Enolase from Pyrobaculum aerophilum (strain ATCC 51768 / DSM 7523 / JCM 9630 / CIP 104966 / NBRC 100827 / IM2).